The following is a 1076-amino-acid chain: Isoleucine--tRNA ligase (1076 aa).

The 'HIGH' region signature appears at 47 to 57; that stretch reads PYTTGQIHLGT. The short motif at 591–595 is the 'KMSKS' region element; the sequence is KMSKS. Lys594 contributes to the ATP binding site.

The protein belongs to the class-I aminoacyl-tRNA synthetase family. IleS type 2 subfamily. Monomer. Zn(2+) is required as a cofactor.

It localises to the cytoplasm. It catalyses the reaction tRNA(Ile) + L-isoleucine + ATP = L-isoleucyl-tRNA(Ile) + AMP + diphosphate. Functionally, catalyzes the attachment of isoleucine to tRNA(Ile). As IleRS can inadvertently accommodate and process structurally similar amino acids such as valine, to avoid such errors it has two additional distinct tRNA(Ile)-dependent editing activities. One activity is designated as 'pretransfer' editing and involves the hydrolysis of activated Val-AMP. The other activity is designated 'posttransfer' editing and involves deacylation of mischarged Val-tRNA(Ile). The sequence is that of Isoleucine--tRNA ligase from Methanoregula boonei (strain DSM 21154 / JCM 14090 / 6A8).